We begin with the raw amino-acid sequence, 180 residues long: Acireductone dioxygenase (180 aa).

The Fe(2+) site is built by H88, H90, E94, and H133. Residues H88, H90, E94, and H133 each contribute to the Ni(2+) site.

Belongs to the acireductone dioxygenase (ARD) family. As to quaternary structure, monomer. Interacts with MMP14. The cofactor is Fe(2+). Ni(2+) is required as a cofactor.

Its subcellular location is the cytoplasm. The protein resides in the nucleus. The protein localises to the cell membrane. The enzyme catalyses 1,2-dihydroxy-5-(methylsulfanyl)pent-1-en-3-one + O2 = 4-methylsulfanyl-2-oxobutanoate + formate + 2 H(+). It catalyses the reaction 1,2-dihydroxy-5-(methylsulfanyl)pent-1-en-3-one + O2 = 3-(methylsulfanyl)propanoate + CO + formate + 2 H(+). Its pathway is amino-acid biosynthesis; L-methionine biosynthesis via salvage pathway; L-methionine from S-methyl-5-thio-alpha-D-ribose 1-phosphate: step 5/6. Functionally, catalyzes 2 different reactions between oxygen and the acireductone 1,2-dihydroxy-3-keto-5-methylthiopentene (DHK-MTPene) depending upon the metal bound in the active site. Fe-containing acireductone dioxygenase (Fe-ARD) produces formate and 2-keto-4-methylthiobutyrate (KMTB), the alpha-ketoacid precursor of methionine in the methionine recycle pathway. Ni-containing acireductone dioxygenase (Ni-ARD) produces methylthiopropionate, carbon monoxide and formate, and does not lie on the methionine recycle pathway. This chain is Acireductone dioxygenase, found in Gallus gallus (Chicken).